The chain runs to 448 residues: UDP-N-acetylmuramate--L-alanine ligase (448 aa).

118-124 (GTHGKTT) is a binding site for ATP.

It belongs to the MurCDEF family.

It localises to the cytoplasm. The enzyme catalyses UDP-N-acetyl-alpha-D-muramate + L-alanine + ATP = UDP-N-acetyl-alpha-D-muramoyl-L-alanine + ADP + phosphate + H(+). Its pathway is cell wall biogenesis; peptidoglycan biosynthesis. Its function is as follows. Cell wall formation. The sequence is that of UDP-N-acetylmuramate--L-alanine ligase from Flavobacterium psychrophilum (strain ATCC 49511 / DSM 21280 / CIP 103535 / JIP02/86).